A 101-amino-acid chain; its full sequence is uncharacterized protein (101 aa).

This is an uncharacterized protein from Cupriavidus necator (strain ATCC 17699 / DSM 428 / KCTC 22496 / NCIMB 10442 / H16 / Stanier 337) (Ralstonia eutropha).